The primary structure comprises 391 residues: 1-deoxy-D-xylulose 5-phosphate reductoisomerase (391 aa).

NADPH-binding residues include threonine 17, glycine 18, serine 19, isoleucine 20, asparagine 47, and asparagine 130. Lysine 131 is a 1-deoxy-D-xylulose 5-phosphate binding site. Residue glutamate 132 coordinates NADPH. Aspartate 156 lines the Mn(2+) pocket. 1-deoxy-D-xylulose 5-phosphate is bound by residues serine 157, glutamate 158, serine 182, and histidine 205. Residue glutamate 158 coordinates Mn(2+). Residue glycine 211 participates in NADPH binding. Serine 218, asparagine 223, lysine 224, and glutamate 227 together coordinate 1-deoxy-D-xylulose 5-phosphate. Glutamate 227 contributes to the Mn(2+) binding site.

This sequence belongs to the DXR family. Mg(2+) is required as a cofactor. It depends on Mn(2+) as a cofactor.

It catalyses the reaction 2-C-methyl-D-erythritol 4-phosphate + NADP(+) = 1-deoxy-D-xylulose 5-phosphate + NADPH + H(+). It functions in the pathway isoprenoid biosynthesis; isopentenyl diphosphate biosynthesis via DXP pathway; isopentenyl diphosphate from 1-deoxy-D-xylulose 5-phosphate: step 1/6. Catalyzes the NADPH-dependent rearrangement and reduction of 1-deoxy-D-xylulose-5-phosphate (DXP) to 2-C-methyl-D-erythritol 4-phosphate (MEP). This Rhizobium meliloti (strain 1021) (Ensifer meliloti) protein is 1-deoxy-D-xylulose 5-phosphate reductoisomerase.